A 128-amino-acid chain; its full sequence is Calcitonin gene-related peptide 1 (128 aa).

An N-terminal signal peptide occupies residues 1–25; the sequence is MGFLKFSPFLVVSILLLYQACGLQA. The propeptide occupies 26–80; sequence VPLRSTLESSPGMAATLSEEEARLLLAALVQNYMQMKVRELEQEQEAEGSSVTAQ. The cysteines at positions 84 and 89 are disulfide-linked. Phe-119 carries the phenylalanine amide modification. Residues 125-128 constitute a propeptide that is removed on maturation; the sequence is DLQA.

This sequence belongs to the calcitonin family.

The protein resides in the secreted. In terms of biological role, CGRP1/CALCA is a peptide hormone that induces vasodilation mediated by the CALCRL-RAMP1 receptor complex. Dilates a variety of vessels including the coronary, cerebral and systemic vasculature. Its abundance in the CNS also points toward a neurotransmitter or neuromodulator role. It also elevates platelet cAMP. CGRP1 can also bind and activate CALCR-RAMP1 (AMYR1) receptor complex. This Rattus norvegicus (Rat) protein is Calcitonin gene-related peptide 1.